The following is a 172-amino-acid chain: Small ribosomal subunit protein uS5 (172 aa).

The S5 DRBM domain maps to 7-70 (VVEHLVNVNR…QNAKKYMIEV (64 aa)).

Belongs to the universal ribosomal protein uS5 family. In terms of assembly, part of the 30S ribosomal subunit. Contacts proteins S4 and S8.

In terms of biological role, with S4 and S12 plays an important role in translational accuracy. Functionally, located at the back of the 30S subunit body where it stabilizes the conformation of the head with respect to the body. The sequence is that of Small ribosomal subunit protein uS5 from Orientia tsutsugamushi (strain Boryong) (Rickettsia tsutsugamushi).